The chain runs to 328 residues: Telomere-binding protein cav (328 aa).

The segment at 107–320 (RRKMVQPYPE…NISLQNSGSE (214 aa)) is required for binding to Su(var)205. The disordered stretch occupies residues 139–228 (DRWQKQKSQN…EFQTEHTDCP (90 aa)). 2 stretches are compositionally biased toward polar residues: residues 144 to 167 (QKSQ…QQDS) and 180 to 189 (ANTNRYSVSQ). 2 consecutive short sequence motifs (su(var)205-binding Pro-containing repeat) follow at residues 228 to 232 (PETQM) and 281 to 287 (PETETNE). Residues 295–319 (INSESMSIGPSIDSEGNISLQNSGS) are compositionally biased toward polar residues. Residues 295 to 328 (INSESMSIGPSIDSEGNISLQNSGSEPIDVDSMA) are disordered.

As to quaternary structure, interacts (via C-terminus) with Su(var)205 dimer (via hinge and chromoshadow domain) and with moi to form the terminin, telomere-capping, complex. Interacts with HP6, which is also part of the terminin complex.

The protein localises to the nucleus. Its subcellular location is the chromosome. It is found in the telomere. In terms of biological role, binds to chromosome ends in a sequence-dependent manner and is required for telomere capping. In Drosophila erecta (Fruit fly), this protein is Telomere-binding protein cav.